We begin with the raw amino-acid sequence, 126 residues long: Holo-[acyl-carrier-protein] synthase (126 aa).

Residues Asp-9 and Glu-57 each coordinate Mg(2+).

The protein belongs to the P-Pant transferase superfamily. AcpS family. Mg(2+) is required as a cofactor.

It localises to the cytoplasm. The enzyme catalyses apo-[ACP] + CoA = holo-[ACP] + adenosine 3',5'-bisphosphate + H(+). Its function is as follows. Transfers the 4'-phosphopantetheine moiety from coenzyme A to a Ser of acyl-carrier-protein. The polypeptide is Holo-[acyl-carrier-protein] synthase (Alteromonas mediterranea (strain DSM 17117 / CIP 110805 / LMG 28347 / Deep ecotype)).